A 174-amino-acid chain; its full sequence is Crossover junction endodeoxyribonuclease RuvC (174 aa).

Active-site residues include aspartate 8, glutamate 67, and aspartate 139. Mg(2+) contacts are provided by aspartate 8, glutamate 67, and aspartate 139.

This sequence belongs to the RuvC family. In terms of assembly, homodimer which binds Holliday junction (HJ) DNA. The HJ becomes 2-fold symmetrical on binding to RuvC with unstacked arms; it has a different conformation from HJ DNA in complex with RuvA. In the full resolvosome a probable DNA-RuvA(4)-RuvB(12)-RuvC(2) complex forms which resolves the HJ. It depends on Mg(2+) as a cofactor.

The protein localises to the cytoplasm. The catalysed reaction is Endonucleolytic cleavage at a junction such as a reciprocal single-stranded crossover between two homologous DNA duplexes (Holliday junction).. The RuvA-RuvB-RuvC complex processes Holliday junction (HJ) DNA during genetic recombination and DNA repair. Endonuclease that resolves HJ intermediates. Cleaves cruciform DNA by making single-stranded nicks across the HJ at symmetrical positions within the homologous arms, yielding a 5'-phosphate and a 3'-hydroxyl group; requires a central core of homology in the junction. The consensus cleavage sequence is 5'-(A/T)TT(C/G)-3'. Cleavage occurs on the 3'-side of the TT dinucleotide at the point of strand exchange. HJ branch migration catalyzed by RuvA-RuvB allows RuvC to scan DNA until it finds its consensus sequence, where it cleaves and resolves the cruciform DNA. The polypeptide is Crossover junction endodeoxyribonuclease RuvC (Pseudomonas syringae pv. syringae (strain B728a)).